The chain runs to 428 residues: C4-dicarboxylate transport protein (428 aa).

8 helical membrane passes run 8-28, 44-64, 78-98, 148-168, 184-204, 222-242, 307-327, and 355-375; these read VLYV…HYYP, LIKM…IAGM, LLYF…ATHI, GEIL…AHLG, VLFG…FGAM, LIGT…GAIA, IYMT…LTWM, and AATL…ILGI.

It belongs to the dicarboxylate/amino acid:cation symporter (DAACS) (TC 2.A.23) family.

Its subcellular location is the cell inner membrane. Its function is as follows. Responsible for the transport of dicarboxylates such as succinate, fumarate, and malate from the periplasm across the membrane. In Burkholderia pseudomallei (strain 1106a), this protein is C4-dicarboxylate transport protein.